Here is a 286-residue protein sequence, read N- to C-terminus: 4-hydroxybenzoate octaprenyltransferase (286 aa).

Transmembrane regions (helical) follow at residues 20–40 (IGTLLLLWPCLMALVLAAQGL), 43–63 (IKVLLIFIVGVVIMRANGCII), 96–116 (LFTLLGLAAFCLVLWLNPLVV), 142–162 (FLGIVWSWSIPMAYAAQLGEV), 167–187 (WWLFMANWCWTVAYDTMYAIV), 210–230 (QIIGVFQLAALGCFVMAGLVA), 235–255 (IYGLGIISFIGFAVYQQRLIF), and 266–286 (FLNNNWAGMVLFIALALDYMI).

The protein belongs to the UbiA prenyltransferase family. The cofactor is Mg(2+).

Its subcellular location is the cell inner membrane. It carries out the reaction all-trans-octaprenyl diphosphate + 4-hydroxybenzoate = 4-hydroxy-3-(all-trans-octaprenyl)benzoate + diphosphate. The protein operates within cofactor biosynthesis; ubiquinone biosynthesis. Its function is as follows. Catalyzes the prenylation of para-hydroxybenzoate (PHB) with an all-trans polyprenyl group. Mediates the second step in the final reaction sequence of ubiquinone-8 (UQ-8) biosynthesis, which is the condensation of the polyisoprenoid side chain with PHB, generating the first membrane-bound Q intermediate 3-octaprenyl-4-hydroxybenzoate. The sequence is that of 4-hydroxybenzoate octaprenyltransferase from Shewanella frigidimarina (strain NCIMB 400).